Consider the following 424-residue polypeptide: Caspase-2 (424 aa).

Residues Met-1 to Asp-140 constitute a propeptide that is removed on maturation. In terms of domain architecture, CARD spans Met-7–Thr-96. Residues His-248 and Cys-291 contribute to the active site. Positions Thr-296–Asp-310 are enriched in basic and acidic residues. Residues Thr-296–Leu-325 are disordered.

The protein belongs to the peptidase C14A family. Heterotetramer that consists of two anti-parallel arranged heterodimers, each one formed by a p18 subunit and a p12 subunit.

It catalyses the reaction Strict requirement for an Asp residue at P1, with 316-Asp being essential for proteolytic activity and has a preferred cleavage sequence of Val-Asp-Val-Ala-Asp-|-.. Its function is as follows. Involved in the activation cascade of caspases responsible for apoptosis execution. Might function by either activating some proteins required for cell death or inactivating proteins necessary for cell survival. The sequence is that of Caspase-2 (CASP2) from Gallus gallus (Chicken).